The chain runs to 613 residues: SNW/SKI-interacting protein (613 aa).

Residues 135 to 170 (EGDLGTVVDEEEELQKEIQETAEETKAAIEKIVNVR) are a coiled coil. Residues 186 to 350 (SQYIKYKPSQ…KARSERTGAA (165 aa)) are SNW. Disordered stretches follow at residues 219 to 252 (LDPP…TVKD), 315 to 437 (MRSK…RDRD), and 513 to 613 (DEQL…SDRR). Phosphoserine occurs at positions 235 and 243. Residues 236 to 247 (PPVPVMHSPPRP) are compositionally biased toward pro residues. Basic and acidic residues-rich tracts occupy residues 315–335 (MRSK…EQEL), 358–437 (DRGR…RDRD), 515–529 (QLDK…KPDK), 538–548 (VGSKRDRPVEF), and 562–574 (WVSD…KPLD). 2 coiled-coil regions span residues 318-349 (KVQK…RTGA) and 391-421 (REER…DAKD). Gly residues predominate over residues 577 to 590 (GSGGTMRASGGGGS). Over residues 592-613 (SRDDDHGGSGRTKINFERSDRR) the composition is skewed to basic and acidic residues.

Belongs to the SNW family. Component of the spliceosome. Interacts with SR45. In terms of tissue distribution, expressed in roots, stems, seedlings, siliques, cotyledons, leaves, inflorescences, seeds and shoot apical meristem.

It is found in the nucleus speckle. Functionally, splicing factor involved in post-transcriptional regulation of circadian clock and flowering time genes. Associates with the pre-mRNA of PRR7, PRR9, ELF3 and GI, and is necessary for the regulation of their alternative splicing and mRNA maturation. Probably involved in splice site recognition. The sequence is that of SNW/SKI-interacting protein (SKIP) from Arabidopsis thaliana (Mouse-ear cress).